The sequence spans 685 residues: Tyrosinase (685 aa).

Ser-2 is subject to N-acetylserine. Residues His-67, His-97, His-106, His-278, His-282, and His-307 each coordinate Cu cation. Residues 95-97 (CTH) constitute a cross-link (2'-(S-cysteinyl)-histidine (Cys-His)). The propeptide at 409–685 (ANFVENVADR…PCGHGPEDHI (277 aa)) is could be involved in enzyme activation.

The protein belongs to the tyrosinase family. Cu(2+) serves as cofactor.

The enzyme catalyses 2 L-dopa + O2 = 2 L-dopaquinone + 2 H2O. The catalysed reaction is L-tyrosine + O2 = L-dopaquinone + H2O. Functionally, this is a copper-containing oxidase that functions in the formation of pigments such as melanins and other polyphenolic compounds. The sequence is that of Tyrosinase (T) from Neurospora crassa (strain ATCC 24698 / 74-OR23-1A / CBS 708.71 / DSM 1257 / FGSC 987).